The primary structure comprises 481 residues: Cerebral cavernous malformations 2 protein-like (481 aa).

Disordered stretches follow at residues 161–193 (PVPA…GTAE) and 214–290 (EARA…DPQN). The span at 184–193 (PEKRRVGTAE) shows a compositional bias: basic and acidic residues. Residues 214 to 223 (EARAAGGGGS) show a composition bias toward gly residues. Over residues 237–251 (WERRQTFSGSWERRH) the composition is skewed to basic and acidic residues.

It belongs to the CCM2 family.

The polypeptide is Cerebral cavernous malformations 2 protein-like (Ccm2l) (Mus musculus (Mouse)).